A 401-amino-acid polypeptide reads, in one-letter code: F-box protein At1g69090 (401 aa).

Positions 1-23 (MASPTLALAQSPPPKSPAVSVSQ) are disordered. One can recognise an F-box domain in the interval 27–74 (HCWSKLPLDLMQLVFERLAFLDFERAKSVCSSWQFGSKQSKPNNQIPW).

This is F-box protein At1g69090 from Arabidopsis thaliana (Mouse-ear cress).